The primary structure comprises 2843 residues: Adenomatous polyposis coli protein (2843 aa).

Alanine 2 carries the N-acetylalanine modification. The stretch at 2 to 61 (AAASYDQLLKQVEALKMENSNLRQELEDNSNHLTKLETEASNMKEVLKQLQGSIEDEAMA) forms a coiled coil. Serine 107 and serine 111 each carry phosphoserine. A coiled-coil region spans residues 127–248 (SRESTGYLEE…ATEAERSSQN (122 aa)). Residues 239-305 (ATEAERSSQN…STHSAPRRLT (67 aa)) form a disordered region. The segment covering 241–261 (EAERSSQNKHETGSHDAERQN) has biased composition (basic and acidic residues). The span at 271-282 (MATSGNGQGSTT) shows a compositional bias: polar residues. The segment covering 290 to 299 (SVLSSSSTHS) has biased composition (low complexity). ARM repeat units lie at residues 453 to 495 (LMKL…HYSI), 505 to 547 (LTNL…IASV), 548 to 591 (LRNL…VLSA), 592 to 638 (LWNL…GGGI), 639 to 683 (LRNV…ACGT), 684 to 725 (LWNL…SAAA), and 726 to 767 (LRNL…LDAQ). Serine 744, serine 748, and serine 780 each carry phosphoserine. Positions 828–878 (TTVLPSSSSSRGSLDSSRSEKDRSLERERGIGLGNYHPATENPGTSSKRGL) are disordered. Over residues 833–843 (SSSSSRGSLDS) the composition is skewed to low complexity. A compositionally biased stretch (basic and acidic residues) spans 844-857 (SRSEKDRSLERERG). Polar residues predominate over residues 869 to 878 (NPGTSSKRGL). Residue serine 908 is modified to Phosphoserine. Disordered stretches follow at residues 923 to 943 (RRSS…SENS) and 958 to 987 (RSSN…ESYS). Polar residues predominate over residues 927 to 943 (AAHTHSNTYNFTKSENS). Residues 960–1337 (SNDSLNSVSS…QHPRTKSSRL (378 aa)) form a responsible for down-regulation through a process mediated by direct ubiquitination region. A compositionally biased stretch (low complexity) spans 961-971 (NDSLNSVSSSD). A phosphoserine mark is found at serine 987, serine 1038, and serine 1042. The segment at 1020–1169 (ELDTPINYSL…TNYSIKYNEE (150 aa)) is interaction with catenins. Disordered regions lie at residues 1099 to 1169 (VSPY…YNEE), 1190 to 1244 (SQKQ…GQPQ), and 1311 to 1376 (IGTR…PEHY). Positions 1107–1130 (ANGSETNRVGSNHGINQNVSQSLC) are enriched in polar residues. Residues 1146 to 1159 (RYSEEEQHEEEERP) are compositionally biased toward basic and acidic residues. Over residues 1190-1224 (SQKQSFSFSKSSSGQSSKTEHMSSSSENTSTPSSN) the composition is skewed to low complexity. Residues 1225 to 1244 (AKRQNQLHPSSAQSRSGQPQ) show a composition bias toward polar residues. 2 stretches are compositionally biased toward low complexity: residues 1335–1345 (SRLQGSSLSSE) and 1355–1366 (SSGAKSPSKSGA). Serine 1360, serine 1371, serine 1385, serine 1392, and serine 1395 each carry phosphoserine. Disordered regions lie at residues 1403-1475 (SSVQ…VNAA), 1526-1569 (PPVQ…DSDD), 1583-1611 (MPTK…KPSQ), 1664-1717 (SPPN…DDNK), and 1729-1836 (NSAM…RVRG). Threonine 1438 carries the post-translational modification Phosphothreonine. Basic and acidic residues-rich tracts occupy residues 1448–1466 (TKRE…RESG) and 1540–1564 (EQPK…KDLL). Phosphoserine is present on serine 1567. Basic and acidic residues predominate over residues 1683-1698 (EFEKRDTIPTEGRSTD). Over residues 1735–1744 (GKSHKPFRVK) the composition is skewed to basic residues. The residue at position 1774 (serine 1774) is a Phosphoserine. Basic and acidic residues-rich tracts occupy residues 1785 to 1794 (YRTRVRKNAD) and 1804 to 1813 (VFSDNKDSKK). Phosphoserine is present on residues serine 1861, serine 1863, and serine 1864. Residues 1866–1893 (DFDDDDVDLSREKAELRKAKENKESEAK) are highly charged. Over residues 1881-1896 (LRKAKENKESEAKVTS) the composition is skewed to basic and acidic residues. Disordered regions lie at residues 1881 to 1950 (LRKA…TDEK), 1965 to 2011 (HNSS…APKS), and 2043 to 2072 (ISSA…GGIL). Polar residues-rich tracts occupy residues 1897 to 1913 (HTEL…TQAI) and 1928 to 1938 (QKQSTFPQSSK). Basic and acidic residues predominate over residues 1939–1950 (DIPDRGAATDEK). A phosphoserine mark is found at serine 1971 and serine 1973. Over residues 1979 to 1991 (NNNKENEPIKETE) the composition is skewed to basic and acidic residues. The segment at 2035-2059 (EDDLLQECISSAMPKKKKPSRLKGD) is interaction with AXIN1. Residues serine 2088, serine 2093, serine 2125, serine 2129, serine 2130, and serine 2132 each carry the phosphoserine modification. 2 disordered regions span residues 2147-2635 (PFHL…SGAT) and 2667-2714 (NNPR…VPMR). At threonine 2151 the chain carries Phosphothreonine. The basic region stretch occupies residues 2167–2674 (ILKPGEKSTL…PINNPRSGRS (508 aa)). The segment covering 2169–2187 (KPGEKSTLETKKIESESKG) has biased composition (basic and acidic residues). 2 stretches are compositionally biased toward polar residues: residues 2203–2223 (VRSN…NMPS) and 2257–2271 (ASKS…TTSP). Residues serine 2260, serine 2270, and serine 2283 each carry the phosphoserine modification. A compositionally biased stretch (polar residues) spans 2286–2331 (ARQTSQIGGSSKAPSRSGSRDSTPSRPAQQPLSRPIQSPGRNSISP). A compositionally biased stretch (low complexity) spans 2348 to 2369 (TSSPSTASTKSSGSGKMSYTSP). Polar residues-rich tracts occupy residues 2370–2409 (GRQM…NGNG) and 2418–2427 (RMSSTKSSGS). The span at 2459–2477 (SASFESLSPSSRPASPTRS) shows a compositional bias: low complexity. Residues serine 2473 and serine 2535 each carry the phosphoserine modification. The interval 2475–2843 (TRSQAQTPVL…HSGSYLVTSV (369 aa)) is interaction with DLG1. Residues 2518–2535 (NDGRPAKRHDIARSHSES) show a composition bias toward basic and acidic residues. Residues 2555–2568 (SSSLPRVSTWRRTG) show a composition bias toward polar residues. Phosphoserine is present on serine 2569. Over residues 2569–2579 (SSSSILSASSE) the composition is skewed to low complexity. Over residues 2580–2592 (SSEKAKSEDEKHV) the composition is skewed to basic and acidic residues. Polar residues-rich tracts occupy residues 2593–2608 (NSIS…QVSA), 2620–2635 (FSPT…SGAT), and 2668–2679 (NPRSGRSPTGNT). Serine 2671 and serine 2674 each carry phosphoserine. The segment at 2674–2843 (SPTGNTPPVI…HSGSYLVTSV (170 aa)) is interaction with MAPRE1. Threonine 2679 is modified (phosphothreonine). A phosphoserine mark is found at serine 2710 and serine 2724. Residues 2729-2843 (DAPDQKGTEI…HSGSYLVTSV (115 aa)) are disordered. Residues 2741-2757 (GQNNPVPVSETNESSIV) are compositionally biased toward polar residues. Residues 2763-2774 (SSSSSSKHSSPS) are compositionally biased toward low complexity. Residues 2784–2812 (FNYNPSPRKSSADSTSARPSQIPTPVNNN) are compositionally biased toward polar residues. Phosphoserine is present on serine 2789. Residues 2803–2806 (SQIP) carry the Microtubule tip localization signal motif. The PDZ-binding signature appears at 2841-2843 (TSV).

This sequence belongs to the adenomatous polyposis coli (APC) family. In terms of assembly, forms homooligomers. Found in a complex consisting of ARHGEF4, APC and CTNNB1. Found in a complex composed of MACF1, APC, AXIN1, CTNNB1 and GSK3B. The complex composed, at least, of APC, CTNNB1 and GSK3B interacts with JPT1; the interaction requires the inactive form of GSK3B (phosphorylated at 'Ser-9'). Interacts with APC2. Interacts with DLG1 (via PDZ domains) and DLG3 (via PDZ domains). Interacts with alpha- and beta-catenins. Interacts with AXIN1 (via RGS domain). Interacts with ARHGEF4 (via N-terminus). Interacts (via C-terminal residues 2674-2843) with MAPRE1 (via C-terminal residues 206-211); the interaction inhibits association with and bundling of F-actin. Interacts with MAPRE2 and MAPRE3 (via C-terminus). Interacts with DIAPH1; DIAPH1 acts as a scaffold protein for MAPRE1 and APC to stabilize microtubules and promote cell migration. Interacts with DIAPH2. Interacts with SCRIB; may mediate APC targeting to adherens junctions of epithelial cells. Interacts with SPATA13 (via N-terminus and SH3 domain). Interacts with ASAP1 (via SH3 domain). Interacts (at the cell membrane) with AMER1 and AMER2 (via ARM repeats). Interacts with KHDRBS1. Interacts with actin; binds both to F-actin and actin filament bundles. Phosphorylated; phosphorylation enhances the F-actin bundling activity. Phosphorylated by GSK3B. Post-translationally, ubiquitinated, leading to its degradation by the proteasome. Ubiquitination is facilitated by Axin. Deubiquitinated by ZRANB1/TRABID. In terms of tissue distribution, expressed in a variety of tissues: brain, small intestine, colon, thymus, skeletal muscle, heart, prostate, lung, spleen, ovary, testis kidney, placenta, blood and liver. Isoform 1A: Very strongly expressed in brain but has relatively low expression levels in other tissues. Isoform 1B: Predominant form in all tissues except for brain, including gastric mucosa and blood.

Its subcellular location is the cell junction. The protein resides in the adherens junction. The protein localises to the cytoplasm. It localises to the cytoskeleton. It is found in the cell projection. Its subcellular location is the lamellipodium. The protein resides in the ruffle membrane. The protein localises to the cell membrane. Its function is as follows. Tumor suppressor. Promotes rapid degradation of CTNNB1 and participates in Wnt signaling as a negative regulator. APC activity is correlated with its phosphorylation state. Activates the GEF activity of SPATA13 and ARHGEF4. Plays a role in hepatocyte growth factor (HGF)-induced cell migration. Required for MMP9 up-regulation via the JNK signaling pathway in colorectal tumor cells. Associates with both microtubules and actin filaments, components of the cytoskeleton. Plays a role in mediating the organization of F-actin into ordered bundles. Functions downstream of Rho GTPases and DIAPH1 to selectively stabilize microtubules. Acts as a mediator of ERBB2-dependent stabilization of microtubules at the cell cortex. It is required for the localization of MACF1 to the cell membrane and this localization of MACF1 is critical for its function in microtubule stabilization. The polypeptide is Adenomatous polyposis coli protein (Homo sapiens (Human)).